We begin with the raw amino-acid sequence, 737 residues long: Palmitoyltransferase akr1 (737 aa).

Over residues 1–15 the composition is skewed to low complexity; that stretch reads MSSGNSSTGTHTNGN. A disordered region spans residues 1 to 39; sequence MSSGNSSTGTHTNGNFATLGSSPPSAVGGKGRAIPPKVT. At 1 to 313 the chain is on the cytoplasmic side; the sequence is MSSGNSSTGT…WVRNKSLMSK (313 aa). ANK repeat units lie at residues 96 to 125, 130 to 159, 163 to 192, 196 to 225, and 228 to 258; these read EGIT…DVNA, SVAT…DPLL, QGYN…PVDV, QGHT…HANA, and EGGL…DKFA. 2 helical membrane-spanning segments follow: residues 314–334 and 335–355; these read FFFL…SNMV and VYAA…VAQK. Residues 356-374 lie on the Cytoplasmic side of the membrane; the sequence is AASQGPSEYRILQKTPYLS. Residues 375 to 395 form a helical membrane-spanning segment; the sequence is GVFAGSLFWVGFRYVFYVLPV. At 396–401 the chain is on the lumenal side; the sequence is TYSTSP. The helical transmembrane segment at 402 to 422 threads the bilayer; that stretch reads ILNGLFAIFFSLTTYFYIYSM. Over 423 to 498 the chain is Cytoplasmic; the sequence is VEDPGFVPKL…DNCVGANNLR (76 aa). The DHHC domain occupies 455–505; sequence NFCVSCMVRRPLRSKHCKRCARCVAKHDHHCPWIDNCVGANNLRHFVLYIT. Residue Cys485 is the S-palmitoyl cysteine intermediate of the active site. The chain crosses the membrane as a helical span at residues 499 to 519; the sequence is HFVLYITCLEVGIVLFVQLTF. The Lumenal portion of the chain corresponds to 520 to 548; that stretch reads NYINSLPAPAQPQCNIINETLCDFVLRDT. A helical membrane pass occupies residues 549–569; it reads FTLVLDLWVCIQLVWITMLVA. The Cytoplasmic segment spans residues 570-737; it reads VQMIQISRNQ…LSVEDPEQGV (168 aa).

This sequence belongs to the DHHC palmitoyltransferase family. AKR/ZDHHC17 subfamily.

Its subcellular location is the early endosome membrane. It localises to the golgi apparatus membrane. It carries out the reaction L-cysteinyl-[protein] + hexadecanoyl-CoA = S-hexadecanoyl-L-cysteinyl-[protein] + CoA. Its function is as follows. Palmitoyltransferase specific for casein kinase 1. In Aspergillus oryzae (strain ATCC 42149 / RIB 40) (Yellow koji mold), this protein is Palmitoyltransferase akr1 (akr1).